Here is a 365-residue protein sequence, read N- to C-terminus: Protein BZR1 homolog 2 (365 aa).

Residues 1-30 (MATGGGGGGGGMGGGGVGGGAGAAGVGVGG) are compositionally biased toward gly residues. Disordered regions lie at residues 1 to 45 (MATG…KRRE), 113 to 154 (SPSP…NMAN), 191 to 236 (SAPV…TPPS), and 344 to 365 (HEDSGSDDLELTLGSSRTRAAA). Residues 31 to 113 (RMPTWREREN…RMEVIGCSVS (83 aa)) form a required for DNA-binding region. The segment covering 113–144 (SPSPCSSYQPSPRASYNASPTSSSFPSGASSP) has biased composition (low complexity). Composition is skewed to polar residues over residues 215–233 (SNVQPTWTGSNSPCVVNST) and 356–365 (LGSSRTRAAA).

This sequence belongs to the BZR/LAT61 family. As to quaternary structure, interacts with PUB24.

Functionally, may function in brassinosteroid signaling. The sequence is that of Protein BZR1 homolog 2 from Oryza sativa subsp. japonica (Rice).